The sequence spans 210 residues: Syntaxin-binding protein 6 (210 aa).

Ser-2 carries the N-acetylserine modification. Residues 151 to 210 form the v-SNARE coiled-coil homology domain; sequence GNSILHSAADSVTSAVQKASQALNERGERLGRAEEKTEDLKNSAQQFAETAHKLAMKHKC.

In terms of assembly, part of a ternary complex containing SNAP25 and STX1A that can be dissociated by NAPA and NSF. Interacts with STX4A. As to expression, detected at low levels in brain, and at very low levels in heart, adrenal gland, testis, liver and kidney.

The protein localises to the cytoplasm. Its subcellular location is the membrane. Forms non-fusogenic complexes with SNAP25 and STX1A and may thereby modulate the formation of functional SNARE complexes and exocytosis. This is Syntaxin-binding protein 6 (STXBP6) from Homo sapiens (Human).